The following is a 381-amino-acid chain: MSLAQPAGTETLVKPKRPWFSPTTKRRWQNFKANRRGYWSFWLFLILFFLSLIAEFIANDKPILASYKGEILVPVMVDYPEEKFGGFLAQTDYKSSFIQDEINANGWMIWPPIRYSYQTVNSNIPHSAPTAPFWLMDEKERCSAYPQGNADPGCTLGNLNWLGTDNQARDVTARMIYGFRISVLFGLTLTIASALVGVTAGAIQGYFGGWTDLLLQRFIEIWSSMPVLYILLIIAAILPPGFFVLLGIMLLFSWVGFVGIVRAEFLRARNFEYVRAARALGVGNWTIMFRHLLPNAMVATLTFLPFILSGSITTLTSLDFLGFGMPPGSPSLGEMIAQGKNNLQAPWLGLTAFFTMSIMLSLLIFVGEAVRDAFDPRKTFR.

5 helical membrane-spanning segments follow: residues 38-58 (YWSFWLFLILFFLSLIAEFIA), 183-203 (VLFGLTLTIASALVGVTAGAI), 230-250 (ILLIIAAILPPGFFVLLGIML), 292-312 (LLPNAMVATLTFLPFILSGSI), and 347-367 (WLGLTAFFTMSIMLSLLIFVG). The 193-residue stretch at 179–371 (FRISVLFGLT…LLIFVGEAVR (193 aa)) folds into the ABC transmembrane type-1 domain.

This sequence belongs to the binding-protein-dependent transport system permease family. The complex is composed of one ATP-binding protein (YejF), two transmembrane proteins (YejB and YejE) and a solute-binding protein (YepA or YejA).

It localises to the cell inner membrane. Functionally, part of the ABC transporter complex YejBEF-YepA involved in the uptake of muropeptides, the breakdown products of cell wall peptidoglycan. The import of muropeptides into the cell enables peptidoglycan recycling, which is vital for cell wall integrity in this bacterium. Is also probably part of the ABC transporter complex YejABEF, which is likely involved in broad-spectrum peptide import. Responsible for the translocation of the substrate across the membrane. The chain is Peptidoglycan transport system permease protein YejE from Agrobacterium fabrum (strain C58 / ATCC 33970) (Agrobacterium tumefaciens (strain C58)).